The following is a 585-amino-acid chain: MAGRWLDPLWAPGFLCVALILETASGAGDLSTKAHGHIQFSARGVNQTAMADCRAVCSLNTSDRCDFVKRNPDCHSEGGYLDYLKGIFCYFPPNLLPLAITLYVFWLLYLFLILGVTAAKFFCPNLSAISTSLKLSHNVAGVTFLAFGNGAPDIFSALVAFSDPRTAGLAIGALFGAGVLVTTVVAGGITILRPFMAASRPFLRDITFYMVAVFLTFTALYLGRITLVWALGYLGLYVFYVVTVIICTWVYQRQRSRSLVHSISETPELLTDSEEDQMSSNTNSYDYGEEYRPLLLGEETTGQILLQALNPLDYRKWRTQSISCKLLKVAKLPVEFLLLLTVPVVDPDKDDRNWKRPLNCLQLVISPLVLVLTLQSGVYGIYEIGGLLPVWAVVVIVGTALASVTFFATSNSEPPRLHWLFAFLGFLTSALWINAAATEVVNILRSLGVVFRLSNTVLGLTLLAWGNSIGDAFSDFTLARQGYPRMAFSACFGGIIFNILVGVGLGCLLQIVRSHASEVKLEPDGLLVWVLASALGLSLVFSLVSVPLQCFQLSKAYGLCLLLFYICFIVVVLLTEFGVIHLKAD.

The N-terminal stretch at 1 to 26 (MAGRWLDPLWAPGFLCVALILETASG) is a signal peptide. Over 27-95 (AGDLSTKAHG…GIFCYFPPNL (69 aa)) the chain is Extracellular. Asn-46 carries an N-linked (GlcNAc...) asparagine glycan. A helical membrane pass occupies residues 96 to 116 (LPLAITLYVFWLLYLFLILGV). At 117–140 (TAAKFFCPNLSAISTSLKLSHNVA) the chain is on the cytoplasmic side. The helical transmembrane segment at 141 to 161 (GVTFLAFGNGAPDIFSALVAF) threads the bilayer. Residues 162-168 (SDPRTAG) are Extracellular-facing. The helical transmembrane segment at 169-189 (LAIGALFGAGVLVTTVVAGGI) threads the bilayer. The Cytoplasmic portion of the chain corresponds to 190–205 (TILRPFMAASRPFLRD). Residues 206–226 (ITFYMVAVFLTFTALYLGRIT) form a helical membrane-spanning segment. A topological domain (extracellular) is located at residue Leu-227. Residues 228–247 (VWALGYLGLYVFYVVTVIIC) form a helical membrane-spanning segment. The Cytoplasmic portion of the chain corresponds to 248 to 325 (TWVYQRQRSR…KWRTQSISCK (78 aa)). Position 258 is a phosphoserine; by PKA (Ser-258). The helical transmembrane segment at 326 to 346 (LLKVAKLPVEFLLLLTVPVVD) threads the bilayer. Residues 347–360 (PDKDDRNWKRPLNC) lie on the Extracellular side of the membrane. The chain crosses the membrane as a helical span at residues 361–381 (LQLVISPLVLVLTLQSGVYGI). Residues 382-383 (YE) lie on the Cytoplasmic side of the membrane. Residues 384 to 404 (IGGLLPVWAVVVIVGTALASV) form a helical membrane-spanning segment. Residues 405–416 (TFFATSNSEPPR) lie on the Extracellular side of the membrane. The helical transmembrane segment at 417–437 (LHWLFAFLGFLTSALWINAAA) threads the bilayer. The Cytoplasmic segment spans residues 438–445 (TEVVNILR). Residues 446–466 (SLGVVFRLSNTVLGLTLLAWG) form a helical membrane-spanning segment. Residues 467-491 (NSIGDAFSDFTLARQGYPRMAFSAC) are Extracellular-facing. A helical transmembrane segment spans residues 492–512 (FGGIIFNILVGVGLGCLLQIV). Residues 513–525 (RSHASEVKLEPDG) lie on the Cytoplasmic side of the membrane. The chain crosses the membrane as a helical span at residues 526–546 (LLVWVLASALGLSLVFSLVSV). Residues 547 to 559 (PLQCFQLSKAYGL) lie on the Extracellular side of the membrane. A helical transmembrane segment spans residues 560–580 (CLLLFYICFIVVVLLTEFGVI). The Cytoplasmic portion of the chain corresponds to 581-585 (HLKAD).

This sequence belongs to the Ca(2+):cation antiporter (CaCA) (TC 2.A.19) family. SLC24A subfamily. Phosphorylation at Ser-258 by PKA prevents calcium overload. Widely expressed. Present at higher level in pancreas, stomach, skeletal muscle and skin (at protein level). Ubiquitously expressed.

Its subcellular location is the mitochondrion inner membrane. The enzyme catalyses Ca(2+)(in) + 3 Na(+)(out) = Ca(2+)(out) + 3 Na(+)(in). It carries out the reaction 3 Li(+)(out) + Ca(2+)(in) = 3 Li(+)(in) + Ca(2+)(out). Its activity is regulated as follows. Inhibited by the sodium/calcium exchanger inhibitor CGP-37157. Strongly inhibited by zinc. Its function is as follows. Mitochondrial sodium/calcium antiporter that mediates sodium-dependent calcium efflux from mitochondrion, by mediating the exchange of 3 sodium ions per 1 calcium ion. Plays a central role in mitochondrial calcium homeostasis by mediating mitochondrial calcium extrusion: calcium efflux is essential for mitochondrial function and cell survival, notably in cardiomyocytes. Regulates rates of glucose-dependent insulin secretion in pancreatic beta-cells during the first phase of insulin secretion: acts by mediating efflux of calcium from mitochondrion, thereby affecting cytoplasmic calcium responses. Required for store-operated Ca(2+) entry (SOCE) and Ca(2+) release-activated Ca(2+) (CRAC) channel regulation: sodium transport by SLC8B1 leads to promote calcium-shuttling that modulates mitochondrial redox status, thereby regulating SOCE activity. Involved in B-lymphocyte chemotaxis. Able to transport Ca(2+) in exchange of either Li(+) or Na(+), explaining how Li(+) catalyzes Ca(2+) exchange. In contrast to other members of the family its function is independent of K(+). This is Mitochondrial sodium/calcium exchanger protein from Rattus norvegicus (Rat).